The chain runs to 390 residues: Putative nickel insertion protein (390 aa).

Belongs to the LarC family.

The polypeptide is Putative nickel insertion protein (Myxococcus xanthus (strain DK1622)).